Consider the following 224-residue polypeptide: Ribonuclease HII (224 aa).

Residues 1 to 219 (MMIAGIDEAG…VENIREELKK (219 aa)) enclose the RNase H type-2 domain. Asp7, Glu8, and Asp105 together coordinate a divalent metal cation.

Belongs to the RNase HII family. Requires Mn(2+) as cofactor. It depends on Mg(2+) as a cofactor.

The protein resides in the cytoplasm. The enzyme catalyses Endonucleolytic cleavage to 5'-phosphomonoester.. Endonuclease that specifically degrades the RNA of RNA-DNA hybrids. The polypeptide is Ribonuclease HII (Methanosarcina barkeri (strain Fusaro / DSM 804)).